The primary structure comprises 237 residues: RNA-binding protein 38 (237 aa).

Positions 1-24 (MLLQPACSPSVFPRPSAAPSAMHG) are disordered. In terms of domain architecture, RRM spans 32-109 (TKIFVGGLPY…RKANVNLAYL (78 aa)).

It belongs to the RBM38 family. As to expression, expressed in cardiac and skeletal muscle tissues.

It is found in the cytoplasm. It localises to the cytosol. Its subcellular location is the nucleus. RNA-binding protein that specifically bind the 3'-UTR of CDKN1A transcripts, leading to maintain the stability of CDKN1A transcripts, thereby acting as a mediator of the p53/TP53 family to regulate CDKN1A. CDKN1A is a cyclin-dependent kinase inhibitor transcriptionally regulated by the p53/TP53 family to induce cell cycle arrest. Has the ability to induce cell cycle arrest in G1 and maintain the stability of CDKN1A transcripts induced by p53/TP53. Also acts as a mRNA splicing factor. Specifically regulates the expression of FGFR2-IIIb, an epithelial cell-specific isoform of FGFR2. Plays a role in myogenic differentiation. In Mus musculus (Mouse), this protein is RNA-binding protein 38 (Rbm38).